The primary structure comprises 180 residues: MAAAAGFNWDDADVKKRWDAFTKFGAATATEMTGKNFDKWLKDAGVLDNKAITGTMTGIAFSKVTGPKKKATFDETKKVLAFVAEDRARQSKKPIQDELDAITEKLAKLEAPSVGGAAKANAAGVYSRLTDHTKYTGAHKERFDAEGKGKGKSGRADTTENTGYVGAYKNKDSYDKTHGK.

2 stretches are compositionally biased toward basic and acidic residues: residues 136 to 158 and 169 to 180; these read TGAHKERFDAEGKGKGKSGRADT and KNKDSYDKTHGK. Residues 136-180 are disordered; sequence TGAHKERFDAEGKGKGKSGRADTTENTGYVGAYKNKDSYDKTHGK.

Belongs to the TPPP family.

In terms of biological role, regulator of microtubule dynamics. The chain is Tubulin polymerization-promoting protein homolog from Caenorhabditis elegans.